The chain runs to 80 residues: Putative membrane protein insertion efficiency factor (80 aa).

Belongs to the UPF0161 family.

The protein resides in the cell membrane. In terms of biological role, could be involved in insertion of integral membrane proteins into the membrane. The polypeptide is Putative membrane protein insertion efficiency factor (Corynebacterium jeikeium (strain K411)).